Reading from the N-terminus, the 346-residue chain is DNA-directed RNA polymerases I and III subunit RPAC1 (346 aa).

Residue Ala-2 is modified to N-acetylalanine.

It belongs to the archaeal Rpo3/eukaryotic RPB3 RNA polymerase subunit family. In terms of assembly, component of the RNA polymerase I and RNA polymerase III complexes consisting of at least 13 and 17 subunits, respectively. Pol I complex consists of a ten-subunit catalytic core composed of POLR1A/RPA1, POLR1B/RPA2, POLR1C/RPAC1, POLR1D/RPAC2, POLR1H/RPA12, POLR2E/RPABC1, POLR2F/RPABC2, POLR2H/RPABC3, POLR2K/RPABC4 and POLR2L/RPABC5; a mobile stalk subunit POLR1F/RPA43 protruding from the core and additional subunits homologous to general transcription factors POLR1E/RPA49 and POLR1G/RPA34. Part of Pol I pre-initiation complex (PIC), in which Pol I core assembles with RRN3 and promoter-bound UTBF and SL1/TIF-IB complex. Pol III complex consists of a ten-subunit catalytic core composed of POLR3A/RPC1, POLR3B/RPC2, POLR1C/RPAC1, POLR1D/RPAC2, POLR3K/RPC10, POLR2E/RPABC1, POLR2F/RPABC2, POLR2H/RPABC3, POLR2K/RPABC4 and POLR2L/RPABC5; a mobile stalk composed of two subunits POLR3H/RPC8 and CRCP/RPC9, protruding from the core and functioning primarily in transcription initiation; and additional subunits homologous to general transcription factors of the RNA polymerase II machinery, POLR3C/RPC3-POLR3F/RPC6-POLR3G/RPC7 heterotrimer required for transcription initiation and POLR3D/RPC4-POLR3E/RPC5 heterodimer involved in both transcription initiation and termination.

Its subcellular location is the nucleus. It is found in the cytoplasm. The protein localises to the cytosol. DNA-dependent RNA polymerase catalyzes the transcription of DNA into RNA using the four ribonucleoside triphosphates as substrates. Common component of RNA polymerases I and III which synthesize ribosomal RNA precursors and short non-coding RNAs including 5S rRNA, snRNAs, tRNAs and miRNAs, respectively. POLR1C/RPAC1 is part of the polymerase core and may function as a clamp element that moves to open and close the cleft. In Bos taurus (Bovine), this protein is DNA-directed RNA polymerases I and III subunit RPAC1 (POLR1C).